Reading from the N-terminus, the 529-residue chain is Peptide chain release factor 3 (529 aa).

In terms of domain architecture, tr-type G spans 11-280; the sequence is AKRRTFAIIS…GLVEWAPAPM (270 aa). GTP is bound by residues 20–27, 88–92, and 142–145; these read SHPDAGKT, DTPGH, and NKLD.

This sequence belongs to the TRAFAC class translation factor GTPase superfamily. Classic translation factor GTPase family. PrfC subfamily.

It localises to the cytoplasm. In terms of biological role, increases the formation of ribosomal termination complexes and stimulates activities of RF-1 and RF-2. It binds guanine nucleotides and has strong preference for UGA stop codons. It may interact directly with the ribosome. The stimulation of RF-1 and RF-2 is significantly reduced by GTP and GDP, but not by GMP. The protein is Peptide chain release factor 3 of Klebsiella pneumoniae (strain 342).